A 101-amino-acid polypeptide reads, in one-letter code: uncharacterized protein (101 aa).

This is an uncharacterized protein from Saccharomyces cerevisiae (strain ATCC 204508 / S288c) (Baker's yeast).